A 489-amino-acid chain; its full sequence is Serine/threonine-protein kinase dyf-5 (489 aa).

A Protein kinase domain is found at 11–291 (YLMTKRLGDG…ANQSLRYKYF (281 aa)). Residues 17–25 (LGDGTFGEV) and Lys-40 contribute to the ATP site. The active-site Proton acceptor is Asp-132. Disordered stretches follow at residues 366–385 (EKSD…KPTA) and 452–489 (QTGP…KYVK). Low complexity predominate over residues 458 to 473 (SNQTNNHSANNSHSPN).

It belongs to the protein kinase superfamily. CMGC Ser/Thr protein kinase family. RCK subfamily. Mg(2+) is required as a cofactor. As to expression, expressed in head neurons including amphid and labial sensory neurons and 3 pairs of neurons in the tail including phasmid sensory neurons. In male, expressed in the tail including the sensory rays and the spicule.

It localises to the perikaryon. The protein resides in the cell projection. Its subcellular location is the dendrite. It is found in the axon. The protein localises to the cilium. It carries out the reaction L-seryl-[protein] + ATP = O-phospho-L-seryl-[protein] + ADP + H(+). It catalyses the reaction L-threonyl-[protein] + ATP = O-phospho-L-threonyl-[protein] + ADP + H(+). Its function is as follows. Serine/threonine-protein kinase which is required for ciliogenesis. Regulates the length and the morphology of sensory neuron cilia. In addition, plays a role in the anterograde intraflagellar transport (IFT) in the cilia by regulating the undocking of kinesin-II motor complex (composed of klp-11, klp-20 and kap-1) before reaching the distal segment and the docking of kinesin motor osm-3 onto IFT cargos. In Caenorhabditis elegans, this protein is Serine/threonine-protein kinase dyf-5.